A 520-amino-acid polypeptide reads, in one-letter code: Ribonuclease Y (520 aa).

The chain crosses the membrane as a helical span at residues 3–23 (IVIVVISILLALIVGIVVGYL). Residues 81 to 118 (RMEAQKQENRLMQKEENLDRKSETLDKRESSLESKEQS) are compositionally biased toward basic and acidic residues. A disordered region spans residues 81-125 (RMEAQKQENRLMQKEENLDRKSETLDKRESSLESKEQSLTEQQQQ). The region spanning 210–273 (TVSVVNLPND…EIARMALEKL (64 aa)) is the KH domain. The region spanning 336 to 429 (GLKHSAEVAY…VAAADALSAA (94 aa)) is the HD domain.

It belongs to the RNase Y family.

Its subcellular location is the cell membrane. Functionally, endoribonuclease that initiates mRNA decay. The protein is Ribonuclease Y of Oceanobacillus iheyensis (strain DSM 14371 / CIP 107618 / JCM 11309 / KCTC 3954 / HTE831).